The chain runs to 348 residues: Phenylalanine--tRNA ligase alpha subunit (348 aa).

Glutamate 262 lines the Mg(2+) pocket.

It belongs to the class-II aminoacyl-tRNA synthetase family. Phe-tRNA synthetase alpha subunit type 1 subfamily. Tetramer of two alpha and two beta subunits. The cofactor is Mg(2+).

It localises to the cytoplasm. It catalyses the reaction tRNA(Phe) + L-phenylalanine + ATP = L-phenylalanyl-tRNA(Phe) + AMP + diphosphate + H(+). The protein is Phenylalanine--tRNA ligase alpha subunit of Streptococcus pneumoniae (strain 70585).